The following is a 190-amino-acid chain: Ribose 1,5-bisphosphate phosphokinase PhnN (190 aa).

19 to 26 serves as a coordination point for ATP; that stretch reads GPSGVGKD.

It belongs to the ribose 1,5-bisphosphokinase family.

It carries out the reaction alpha-D-ribose 1,5-bisphosphate + ATP = 5-phospho-alpha-D-ribose 1-diphosphate + ADP. It participates in metabolic intermediate biosynthesis; 5-phospho-alpha-D-ribose 1-diphosphate biosynthesis; 5-phospho-alpha-D-ribose 1-diphosphate from D-ribose 5-phosphate (route II): step 3/3. Its function is as follows. Catalyzes the phosphorylation of ribose 1,5-bisphosphate to 5-phospho-D-ribosyl alpha-1-diphosphate (PRPP). The polypeptide is Ribose 1,5-bisphosphate phosphokinase PhnN (Ruegeria sp. (strain TM1040) (Silicibacter sp.)).